The chain runs to 266 residues: Undecaprenyl-diphosphatase (266 aa).

A run of 8 helical transmembrane segments spans residues 1–21 (MDIF…FLPI), 39–59 (QGLT…VIYF), 87–107 (WWII…KDFI), 114–134 (IEVI…ADKL), 144–164 (VGWK…IPGT), 184–204 (AARF…ILVV), 218–238 (ALVL…HYFL), and 246–266 (MTPF…VIFA).

Belongs to the UppP family.

The protein localises to the cell inner membrane. The enzyme catalyses di-trans,octa-cis-undecaprenyl diphosphate + H2O = di-trans,octa-cis-undecaprenyl phosphate + phosphate + H(+). In terms of biological role, catalyzes the dephosphorylation of undecaprenyl diphosphate (UPP). Confers resistance to bacitracin. The polypeptide is Undecaprenyl-diphosphatase (Shewanella loihica (strain ATCC BAA-1088 / PV-4)).